The following is a 384-amino-acid chain: WD repeat-containing protein 74 (384 aa).

WD repeat units lie at residues 40–80 (RREE…FLSQ), 83–122 (CPGG…ASSD), 128–168 (KVGP…EPVF), 179–220 (DLRV…RRPV), 224–266 (TYGE…GCLK), and 267–306 (GLAG…GLEH). At serine 214 the chain carries Phosphoserine. An N6-methyllysine modification is found at lysine 311. The required for nucleolar and nuclear location stretch occupies residues 320 to 384 (SGRDNWEDEP…KKKRPGSTSP (65 aa)). The disordered stretch occupies residues 323 to 384 (DNWEDEPQEP…KKKRPGSTSP (62 aa)). The segment covering 371–384 (QRRKKKKRPGSTSP) has biased composition (basic residues).

Isoform 1 interacts (through WDR repeats) with NVL; the interaction is independent of RNA or pre-60S ribosome particles. Isoform 2 does not interact with NVL. Interacts with MTREX; the interaction dissociation in a late stage of rRNA synthesis is required for appropriate maturation of pre-60S particles and depends on the ATPase activity of NVL.

The protein resides in the nucleus. It is found in the nucleolus. Its function is as follows. Regulatory protein of the MTREX-exosome complex involved in the synthesis of the 60S ribosomal subunit. Participates in an early cleavage of the pre-rRNA processing pathway in cooperation with NVL. Required for blastocyst formation, is necessary for RNA transcription, processing and/or stability during preimplantation development. In Mus musculus (Mouse), this protein is WD repeat-containing protein 74 (Wdr74).